The primary structure comprises 208 residues: Heavy metal-associated isoprenylated plant protein 42 (208 aa).

Residues 6–70 (FPICILKMNL…AVAKLGQSPQ (65 aa)) enclose the HMA domain. The interval 93 to 116 (ATNKTQDKPSPPAPPVTATTPVET) is disordered. A Cysteine methyl ester modification is found at Cys205. Cys205 carries the S-farnesyl cysteine lipid modification. Positions 206–208 (SIM) are cleaved as a propeptide — removed in mature form.

The protein belongs to the HIPP family.

Its function is as follows. Probable heavy-metal-binding protein. This is Heavy metal-associated isoprenylated plant protein 42 from Arabidopsis thaliana (Mouse-ear cress).